A 153-amino-acid chain; its full sequence is Large ribosomal subunit protein uL15 (153 aa).

The disordered stretch occupies residues 1 to 49; it reads MQLHNLYPFPEERKTRRRVGRGSGSGLGCTAGKGHKGQNARAGGGVAPG. Over residues 21 to 31 the composition is skewed to gly residues; the sequence is RGSGSGLGCTA.

It belongs to the universal ribosomal protein uL15 family. In terms of assembly, part of the 50S ribosomal subunit.

Its function is as follows. Binds to the 23S rRNA. In Desulfovibrio desulfuricans (strain ATCC 27774 / DSM 6949 / MB), this protein is Large ribosomal subunit protein uL15.